A 1624-amino-acid polypeptide reads, in one-letter code: NAD-specific glutamate dehydrogenase (1624 aa).

K845 is a catalytic residue.

This sequence belongs to the Glu/Leu/Phe/Val dehydrogenases family. In terms of assembly, interacts with (unphosphorylated) GarA.

The enzyme catalyses L-glutamate + NAD(+) + H2O = 2-oxoglutarate + NH4(+) + NADH + H(+). With respect to regulation, activity is inhibited by unphosphorylated GarA. In terms of biological role, catalyzes the reversible conversion of L-glutamate to 2-oxoglutarate. The sequence is that of NAD-specific glutamate dehydrogenase (gdh) from Mycobacterium tuberculosis (strain ATCC 25618 / H37Rv).